The sequence spans 556 residues: Dihydroxy-acid dehydratase (556 aa).

Cys-47 is a [2Fe-2S] cluster binding site. Asp-79 lines the Mg(2+) pocket. Cys-120 lines the [2Fe-2S] cluster pocket. Positions 121 and 122 each coordinate Mg(2+). The residue at position 122 (Lys-122) is an N6-carboxylysine. Cys-192 serves as a coordination point for [2Fe-2S] cluster. Glu-444 is a Mg(2+) binding site. The active-site Proton acceptor is the Ser-470.

It belongs to the IlvD/Edd family. Homodimer. Requires [2Fe-2S] cluster as cofactor. Mg(2+) is required as a cofactor.

It catalyses the reaction (2R)-2,3-dihydroxy-3-methylbutanoate = 3-methyl-2-oxobutanoate + H2O. It carries out the reaction (2R,3R)-2,3-dihydroxy-3-methylpentanoate = (S)-3-methyl-2-oxopentanoate + H2O. It functions in the pathway amino-acid biosynthesis; L-isoleucine biosynthesis; L-isoleucine from 2-oxobutanoate: step 3/4. The protein operates within amino-acid biosynthesis; L-valine biosynthesis; L-valine from pyruvate: step 3/4. Functions in the biosynthesis of branched-chain amino acids. Catalyzes the dehydration of (2R,3R)-2,3-dihydroxy-3-methylpentanoate (2,3-dihydroxy-3-methylvalerate) into 2-oxo-3-methylpentanoate (2-oxo-3-methylvalerate) and of (2R)-2,3-dihydroxy-3-methylbutanoate (2,3-dihydroxyisovalerate) into 2-oxo-3-methylbutanoate (2-oxoisovalerate), the penultimate precursor to L-isoleucine and L-valine, respectively. This chain is Dihydroxy-acid dehydratase, found in Prochlorococcus marinus (strain MIT 9303).